Consider the following 186-residue polypeptide: MDKNSRYTVDSSILFRQWLNDTREMVQDTIFHSRIQKKNNNHLVSQRVFFEQNAHSHYFSYRNNKNLFKENPVSYIRHQSLYNVLKNLKKGRYNPDISIDLHGLTQHQAQQALGELITTCQKEKIFCAHIMHGHGKHILKKQTPFWLSQHPDIIAFHEAPKFFGSDAAIIVIIEINSLKKNINIFN.

A Smr domain is found at 99–174; that stretch reads IDLHGLTQHQ…SDAAIIVIIE (76 aa).

It belongs to the SmrB family. Associates with collided ribosomes, but not with correctly translating polysomes.

Its function is as follows. Acts as a ribosome collision sensor. Detects stalled/collided disomes (pairs of ribosomes where the leading ribosome is stalled and a second ribosome has collided with it) and endonucleolytically cleaves mRNA at the 5' boundary of the stalled ribosome. Stalled/collided disomes form a new interface (primarily via the 30S subunits) that binds SmrB. Cleaved mRNA becomes available for tmRNA ligation, leading to ribosomal subunit dissociation and rescue of stalled ribosomes. This chain is Ribosome rescue factor SmrB, found in Buchnera aphidicola subsp. Acyrthosiphon pisum (strain Tuc7).